The chain runs to 328 residues: Glycerophosphodiester phosphodiesterase GDPD4 (328 aa).

A helical transmembrane segment spans residues 35-55; that stretch reads TILFAVIFLAIFPPLYFHFKL. The GP-PDE domain maps to 73–312; sequence PLVCAHGGDS…SDPSMFQGLM (240 aa).

It belongs to the glycerophosphoryl diester phosphodiesterase family. In terms of tissue distribution, expressed in rosette and cauline leaves.

It localises to the membrane. It carries out the reaction a sn-glycero-3-phosphodiester + H2O = an alcohol + sn-glycerol 3-phosphate + H(+). This chain is Glycerophosphodiester phosphodiesterase GDPD4, found in Arabidopsis thaliana (Mouse-ear cress).